The chain runs to 394 residues: MSFLGTPYSNGATRAMLLGSGELGKEVAIELQRLGVEVIAVDRYANAPAMQVAHRSHVISMLDGEALSQLVQQEKPHFIIPEIEAIATETLQKLEQEGFNVVPTALATRLTMDREGIRRLAAETLKLPTSPYFFAETEAEYQQAVEQIGFPCVIKPVMSSSGKGQSVVRKADQVAVAWQYAQEGGRAGRGRVIVEGFVPFDYEITLLTVSAVDGIHFCAPIGHRQEDGDYRESWQPQVMSDALLEKSQHVAREVVKALGGYGLFGVELFIKGDEVYFSEVSPRPHDTGMVTLISQDMSEFALHVRAILGLPIGKITQYGPAASAVVLREGNSTDIRYGNLPAALAQIPGAQLRLFGKPEIAGRRRLGVALVRAENVELAIEQAKQVAAAVDVKF.

N(1)-(5-phospho-beta-D-ribosyl)glycinamide-binding positions include 22–23 (EL) and glutamate 82. Residues arginine 114, lysine 155, 160–165 (SSGKGQ), 195–198 (EGFV), and glutamate 203 each bind ATP. The ATP-grasp domain occupies 119 to 308 (RLAAETLKLP…EFALHVRAIL (190 aa)). Residues glutamate 267 and glutamate 279 each contribute to the Mg(2+) site. N(1)-(5-phospho-beta-D-ribosyl)glycinamide is bound by residues aspartate 286, lysine 357, and 364 to 365 (RR).

This sequence belongs to the PurK/PurT family. As to quaternary structure, homodimer.

The enzyme catalyses N(1)-(5-phospho-beta-D-ribosyl)glycinamide + formate + ATP = N(2)-formyl-N(1)-(5-phospho-beta-D-ribosyl)glycinamide + ADP + phosphate + H(+). Its pathway is purine metabolism; IMP biosynthesis via de novo pathway; N(2)-formyl-N(1)-(5-phospho-D-ribosyl)glycinamide from N(1)-(5-phospho-D-ribosyl)glycinamide (formate route): step 1/1. Functionally, involved in the de novo purine biosynthesis. Catalyzes the transfer of formate to 5-phospho-ribosyl-glycinamide (GAR), producing 5-phospho-ribosyl-N-formylglycinamide (FGAR). Formate is provided by PurU via hydrolysis of 10-formyl-tetrahydrofolate. The sequence is that of Formate-dependent phosphoribosylglycinamide formyltransferase from Tolumonas auensis (strain DSM 9187 / NBRC 110442 / TA 4).